Here is a 557-residue protein sequence, read N- to C-terminus: Formate--tetrahydrofolate ligase (557 aa).

66-73 (TPAGEGKS) lines the ATP pocket.

This sequence belongs to the formate--tetrahydrofolate ligase family.

It catalyses the reaction (6S)-5,6,7,8-tetrahydrofolate + formate + ATP = (6R)-10-formyltetrahydrofolate + ADP + phosphate. The protein operates within one-carbon metabolism; tetrahydrofolate interconversion. This chain is Formate--tetrahydrofolate ligase, found in Clostridium botulinum (strain Loch Maree / Type A3).